A 523-amino-acid polypeptide reads, in one-letter code: 2-isopropylmalate synthase (523 aa).

In terms of domain architecture, Pyruvate carboxyltransferase spans 5–267 (VIIFDTTLRD…HTRINHQEIW (263 aa)). Positions 14, 202, 204, and 238 each coordinate Mn(2+). Positions 392 to 523 (RLDYFSVQSG…QNKENNKETV (132 aa)) are regulatory domain.

The protein belongs to the alpha-IPM synthase/homocitrate synthase family. LeuA type 1 subfamily. Homodimer. Requires Mn(2+) as cofactor.

The protein resides in the cytoplasm. It carries out the reaction 3-methyl-2-oxobutanoate + acetyl-CoA + H2O = (2S)-2-isopropylmalate + CoA + H(+). The protein operates within amino-acid biosynthesis; L-leucine biosynthesis; L-leucine from 3-methyl-2-oxobutanoate: step 1/4. Catalyzes the condensation of the acetyl group of acetyl-CoA with 3-methyl-2-oxobutanoate (2-ketoisovalerate) to form 3-carboxy-3-hydroxy-4-methylpentanoate (2-isopropylmalate). The protein is 2-isopropylmalate synthase of Citrobacter koseri (strain ATCC BAA-895 / CDC 4225-83 / SGSC4696).